The sequence spans 123 residues: Defensin beta 118 (123 aa).

The first 19 residues, 1–19, serve as a signal peptide directing secretion; the sequence is MKLLLLALPMLVLLPQVIP. Intrachain disulfides connect Cys-27-Cys-54, Cys-34-Cys-48, and Cys-38-Cys-55. A propeptide spanning residues 65–123 is cleaved from the precursor; it reads VPATSPTPLSDSTPGIIDDILTVRFTTDYFEVSSKKDMVEESEAGRGTETSLPNVHHSS. Residues 100–110 show a composition bias toward basic and acidic residues; the sequence is KDMVEESEAGR. A disordered region spans residues 100–123; it reads KDMVEESEAGRGTETSLPNVHHSS. Residues 112-123 are compositionally biased toward polar residues; the sequence is TETSLPNVHHSS.

Belongs to the beta-defensin family. The three-dimensional structure formed by the three intramolecular disulfide bridges is indispensable for antimicrobial activity. In terms of tissue distribution, high-level and epididymis-specific expression. Most abundant in the epithelium of the caput and present in the epididymis lumen and bound to sperm. Also expressed in pancreas.

The protein resides in the secreted. In terms of biological role, host defense peptide that exhibits antimicrobial activity against both Gram-negative bacteria, such as E.coli and S.typhimurium, and Gram-positive bacteria, such as S.aureus and B.subtilis. Inhibits cell adhesion of E.coli on intestinal epithelial enterocytes. Causes rapid permeabilization of both the outer and inner membrane of E.coli, leading to morphological alterations on the bacterial surface. Binds to bacterial lipopolysaccharides (LPS) with high affinity, and may thereby be involved in immunoregulation through LPS neutralization. May contribute to epididymal innate immunity and protect the sperm against attack by microorganisms. The chain is Defensin beta 118 (DEFB118) from Homo sapiens (Human).